The chain runs to 325 residues: ATP phosphoribosyltransferase (325 aa).

It belongs to the ATP phosphoribosyltransferase family. Long subfamily. It depends on Mg(2+) as a cofactor.

The protein resides in the cytoplasm. It carries out the reaction 1-(5-phospho-beta-D-ribosyl)-ATP + diphosphate = 5-phospho-alpha-D-ribose 1-diphosphate + ATP. It functions in the pathway amino-acid biosynthesis; L-histidine biosynthesis; L-histidine from 5-phospho-alpha-D-ribose 1-diphosphate: step 1/9. Its activity is regulated as follows. Feedback inhibited by histidine. Its function is as follows. Catalyzes the condensation of ATP and 5-phosphoribose 1-diphosphate to form N'-(5'-phosphoribosyl)-ATP (PR-ATP). Has a crucial role in the pathway because the rate of histidine biosynthesis seems to be controlled primarily by regulation of HisG enzymatic activity. The chain is ATP phosphoribosyltransferase from Afipia carboxidovorans (strain ATCC 49405 / DSM 1227 / KCTC 32145 / OM5) (Oligotropha carboxidovorans).